A 482-amino-acid polypeptide reads, in one-letter code: Transcription initiation factor IIE subunit alpha (482 aa).

An HTH TFE/IIEalpha-type domain is found at 9–99 (VKNLLKFVVR…KYPHAIDAIK (91 aa)). A C4-type zinc finger spans residues 124–152 (CPICLTKYTQLEAVQLLNFDRTEFLCSLC). Positions 274-286 (RELQERQAEEKRK) are enriched in basic and acidic residues. 2 disordered regions span residues 274 to 295 (RELQERQAEEKRKQNAVPEWHK) and 321 to 482 (AMDS…FEDV). The segment covering 321-345 (AMDSINPDNEPAQETSYQNNRTLTE) has biased composition (polar residues). A compositionally biased stretch (acidic residues) spans 374–401 (EEEEEEEEEEDEEEEEEEEMEDVMDDND). The span at 419-432 (TAGTAKTESNTSND) shows a compositional bias: polar residues. Over residues 433 to 444 (VKQESINDKTED) the composition is skewed to basic and acidic residues. Positions 464–482 (GDDDDDDDDDEMDIEFEDV) are enriched in acidic residues.

The protein belongs to the TFIIE alpha subunit family. As to quaternary structure, TFIIE is a tetramer of two alpha (TFA1) and two beta (TFA2) subunits.

It localises to the nucleus. Its function is as follows. Recruits TFIIH to the initiation complex and stimulates the RNA polymerase II C-terminal domain kinase and DNA-dependent ATPase activities of TFIIH. Both TFIIH and TFIIE are required for promoter clearance by RNA polymerase. In Saccharomyces cerevisiae (strain ATCC 204508 / S288c) (Baker's yeast), this protein is Transcription initiation factor IIE subunit alpha (TFA1).